The following is a 173-amino-acid chain: Small ribosomal subunit protein uS13 (173 aa).

Residues 130-143 show a composition bias toward basic residues; that stretch reads GVRHKRGQKVRGQR. The interval 130 to 155 is disordered; the sequence is GVRHKRGQKVRGQRTKSTGRTEGTIG.

Belongs to the universal ribosomal protein uS13 family. As to quaternary structure, part of the 30S ribosomal subunit. Forms a loose heterodimer with protein S19. Forms two bridges to the 50S subunit in the 70S ribosome.

In terms of biological role, located at the top of the head of the 30S subunit, it contacts several helices of the 16S rRNA. In the 70S ribosome it contacts the 23S rRNA (bridge B1a) and protein L5 of the 50S subunit (bridge B1b), connecting the 2 subunits; these bridges are implicated in subunit movement. The chain is Small ribosomal subunit protein uS13 from Haloquadratum walsbyi (strain DSM 16790 / HBSQ001).